The primary structure comprises 87 residues: Developmentally-regulated ectodermal protein (87 aa).

The signal sequence occupies residues 1–16 (MKRLLVLTLVSAILMA).

This chain is Developmentally-regulated ectodermal protein, found in Tripneustes gratilla (Hawaian sea urchin).